A 517-amino-acid chain; its full sequence is Ribonuclease Y (517 aa).

Residues 1-21 form a helical membrane-spanning segment; that stretch reads MIEVVVGIGAGLIGIGAGYLV. A KH domain is found at 207–273; the sequence is LINVVNIKND…TRVIELLVED (67 aa). The HD domain maps to 333–426; sequence ALAHSLEVAH…VCAADALSAA (94 aa).

It belongs to the RNase Y family.

Its subcellular location is the cell membrane. Functionally, endoribonuclease that initiates mRNA decay. The polypeptide is Ribonuclease Y (Campylobacter fetus subsp. fetus (strain 82-40)).